The following is a 326-amino-acid chain: Probable iron chelatin transport system permease protein jhp_0822 (326 aa).

Helical transmembrane passes span 7 to 27, 64 to 84, 91 to 111, 113 to 133, 142 to 162, 164 to 184, 187 to 207, 241 to 261, 275 to 295, and 301 to 321; these read IALA…ESLS, ILAL…QTIL, PFLL…IAVV, SNIA…VLAM, LSLV…AGAI, FFVI…SLSL, YKDC…LFLL, VASA…LVIP, LLLS…VVAK, and DLPV…WLLF.

It belongs to the binding-protein-dependent transport system permease family. FecCD subfamily.

Its subcellular location is the cell inner membrane. In terms of biological role, part of a binding-protein-dependent transport system for an iron chelatin; probably responsible for the translocation of the substrate across the membrane. The protein is Probable iron chelatin transport system permease protein jhp_0822 of Helicobacter pylori (strain J99 / ATCC 700824) (Campylobacter pylori J99).